We begin with the raw amino-acid sequence, 445 residues long: MAQFFKAKPNRSKQLSSKLSLNVTQLDHLGAGIAHHQGKIVFINGALPGETVQVQLTEQKKKFSRAKLLKVETASGERVSPLCIHYEKCGGCDLQHLNVESQRAHKAKALQELVAKFAQTTASQVCETLSDSPWHYRRRARLATWFDKKTKHISLGFRASSSSDVVEIQSCVVLAKPLSALIPELAFLLNQLSGKKALGHVELTLADNGIFVVLRVTKALSDKDRQRLAEFGASHSLNMLLQDDDANTESLSGHGQQPFYSFNDSDAELKFSAGNFIQVNASVNQAMVNQAVDWLAPQANERVLDLFCGIGNFSLPLAKSGAEVIGVEGVPAMVEQATVNAKGAALDKVSFYHADLSADLSQQPWLGKVDKMLIDPARAGAYESMLSLKKLKPQALVYVSCNPASLARDSEVILKQGYRLTKIAMVDMFPQTHHLESMALFELGK.

The TRAM domain maps to 12–70 (SKQLSSKLSLNVTQLDHLGAGIAHHQGKIVFINGALPGETVQVQLTEQKKKFSRAKLLK). The [4Fe-4S] cluster site is built by Cys83, Cys89, Cys92, and Cys171. S-adenosyl-L-methionine contacts are provided by Gln278, Phe307, Asn312, Glu328, Asp355, and Asp375. Cys401 serves as the catalytic Nucleophile.

The protein belongs to the class I-like SAM-binding methyltransferase superfamily. RNA M5U methyltransferase family. RlmD subfamily.

The catalysed reaction is uridine(1939) in 23S rRNA + S-adenosyl-L-methionine = 5-methyluridine(1939) in 23S rRNA + S-adenosyl-L-homocysteine + H(+). Catalyzes the formation of 5-methyl-uridine at position 1939 (m5U1939) in 23S rRNA. This Shewanella piezotolerans (strain WP3 / JCM 13877) protein is 23S rRNA (uracil(1939)-C(5))-methyltransferase RlmD.